A 346-amino-acid polypeptide reads, in one-letter code: 3-isopropylmalate dehydrogenase (346 aa).

Residue 76 to 87 (GPQWTDPNNRPE) coordinates NAD(+). Positions 94, 104, 132, and 217 each coordinate substrate. Residues Asp-217, Asp-241, and Asp-245 each coordinate Mg(2+). Position 275–287 (275–287 (GSAPDIANQNLAN)) interacts with NAD(+).

The protein belongs to the isocitrate and isopropylmalate dehydrogenases family. LeuB type 1 subfamily. In terms of assembly, homodimer. The cofactor is Mg(2+). Requires Mn(2+) as cofactor.

Its subcellular location is the cytoplasm. It carries out the reaction (2R,3S)-3-isopropylmalate + NAD(+) = 4-methyl-2-oxopentanoate + CO2 + NADH. The protein operates within amino-acid biosynthesis; L-leucine biosynthesis; L-leucine from 3-methyl-2-oxobutanoate: step 3/4. Functionally, catalyzes the oxidation of 3-carboxy-2-hydroxy-4-methylpentanoate (3-isopropylmalate) to 3-carboxy-4-methyl-2-oxopentanoate. The product decarboxylates to 4-methyl-2 oxopentanoate. The chain is 3-isopropylmalate dehydrogenase from Staphylococcus haemolyticus (strain JCSC1435).